A 358-amino-acid chain; its full sequence is Heterogeneous nuclear ribonucleoprotein A2 homolog 2 (358 aa).

RRM domains lie at 9-92 (RKLF…ESAK) and 100-179 (KKLF…LSKQ). Disordered regions lie at residues 182–217 (QDVQ…FRGG) and 333–358 (YGGG…RNRY). Gly residues predominate over residues 193-217 (GNFGFGDSRGGGNFGSGPGGNFRGG). Positions 309 to 352 (QQSSSYGPMKSGGNFGGNRSMGGPYGGGNYGPGNGSGASGGGGY) are nuclear targeting sequence.

The protein localises to the nucleus. In terms of biological role, forms complexes (ribonucleosomes) with at least 20 other different hnRNP and heterogeneous nuclear RNA in the nucleus. This Xenopus laevis (African clawed frog) protein is Heterogeneous nuclear ribonucleoprotein A2 homolog 2.